We begin with the raw amino-acid sequence, 1009 residues long: Putative receptor-like protein 8 (1009 aa).

The signal sequence occupies residues 1-22 (MKTNFVILLLLLCVFAISPSQQ). The Extracellular segment spans residues 23-961 (EEINQHNPGI…EEDDEAPVDM (939 aa)). 2 N-linked (GlcNAc...) asparagine glycosylation sites follow: Asn159 and Asn197. An LRR 1; degenerate repeat occupies 204–231 (FEEVRSLELSAGLNGFVDNVEGYKSLRK). 25 LRR repeats span residues 232–255 (LKNL…PFIN), 257–281 (ATSL…EIKD), 282–305 (LTNL…LTHL), 306–329 (KKLK…VVCE), 331–354 (KNLW…LGRL), 355–377 (NKLR…TFNR), 379–402 (ESLE…PLAN), 404–427 (TKLK…SEPK), 442–465 (LEKI…ATIV), 466–490 (HELQ…GYAL), 492–514 (NLLR…MGEM), 515–538 (VNIT…FVTG), 540–565 (FSLK…SFTS), 567–587 (EELR…LLSS), 588–612 (NTTL…MSNL), 613–636 (SGLT…LLAI), 638–660 (FLSL…VGGE), 662–681 (GIKL…DTLL), 682–705 (EKVQ…VNTE), 707–728 (IYIL…LCDL), 729–752 (RNIR…LYNL), 819–842 (LDYM…ELGS), 843–866 (LSKL…SFSN), 867–891 (LKDI…LTNL), and 893–916 (SLVV…QFNT). Residue Asn267 is glycosylated (N-linked (GlcNAc...) asparagine). 2 N-linked (GlcNAc...) asparagine glycosylation sites follow: Asn390 and Asn402. 4 N-linked (GlcNAc...) asparagine glycosylation sites follow: Asn497, Asn516, Asn526, and Asn551. Residues Asn588 and Asn611 are each glycosylated (N-linked (GlcNAc...) asparagine). Residues Asn716 and Asn751 are each glycosylated (N-linked (GlcNAc...) asparagine). N-linked (GlcNAc...) asparagine glycosylation is found at Asn850, Asn890, Asn903, and Asn934. The tract at residues 934–955 (NRSCDAKKTSDESENGGEEEDD) is disordered. Acidic residues predominate over residues 945–955 (ESENGGEEEDD). The helical transmembrane segment at 962 to 982 (LAFYFSSASTYVTTLIGIFIL) threads the bilayer. Topologically, residues 983–1009 (MCFDCPLRRAWLRIVDASIASVKSMLP) are cytoplasmic.

Belongs to the RLP family.

The protein resides in the cell membrane. This Arabidopsis thaliana (Mouse-ear cress) protein is Putative receptor-like protein 8.